A 284-amino-acid polypeptide reads, in one-letter code: Undecaprenyl-diphosphatase (284 aa).

Transmembrane regions (helical) follow at residues 7–27, 44–64, 90–110, 116–136, 167–187, 197–217, 229–249, and 259–279; these read IILG…TGHL, EMFD…LYFH, LWLK…PLND, FYHF…FIVI, VLSL…ALLI, FTFF…ILHF, FGVL…AIKF, and FTFF…YAAF.

The protein belongs to the UppP family.

The protein localises to the cell membrane. The enzyme catalyses di-trans,octa-cis-undecaprenyl diphosphate + H2O = di-trans,octa-cis-undecaprenyl phosphate + phosphate + H(+). In terms of biological role, catalyzes the dephosphorylation of undecaprenyl diphosphate (UPP). Confers resistance to bacitracin. This is Undecaprenyl-diphosphatase from Lactococcus lactis subsp. cremoris (strain SK11).